A 139-amino-acid chain; its full sequence is CLAVATA3/ESR (CLE)-related protein 1 (139 aa).

The N-terminal stretch at 1–22 is a signal peptide; that stretch reads MPNIFKILLIVLLAVVSFRLSA. The required for secretion from the host cytoplasm to the host apoplasm stretch occupies residues 23 to 90; it reads STGDKKTAND…VPSHLTNRSM (68 aa). 2 N-linked (GlcNAc...) asparagine glycosylation sites follow: Asn37 and Asn87. Residues 66–139 are disordered; the sequence is AIGRSNAQGG…SPSGPDPHHH (74 aa). A coiled-coil region spans residues 100–125; it reads EKGAATRVEKMRAQLRELAEKMTDKD. The span at 106–128 shows a compositional bias: basic and acidic residues; it reads RVEKMRAQLRELAEKMTDKDPKR. The short motif at 128-139 is the CLE element; that stretch reads RLSPSGPDPHHH.

The protein belongs to the CLV3/ESR signal peptide family. As to expression, highly expressed exclusively within the dorsal esophageal gland cell during syncytium formation in host plants (at protein level).

The protein resides in the secreted. It localises to the host cytoplasm. It is found in the host extracellular space. The protein localises to the extracellular space. Its subcellular location is the apoplast. Its function is as follows. Mimics host plant CLE extracellular signal peptides that regulate cell fate. May play a role in the differentiation or division of feeding cells (syncytia) induced in plant roots during infection. This is CLAVATA3/ESR (CLE)-related protein 1 (CLE1) from Heterodera glycines (Soybean cyst nematode worm).